The chain runs to 186 residues: UPF0397 protein SGO_0469 (186 aa).

Transmembrane regions (helical) follow at residues 14 to 34 (VVAT…SIPT), 50 to 70 (LFGV…GHAL), 77 to 97 (GNPW…VGLL), 119 to 139 (AQFV…DILI), and 152 to 172 (VVAT…LLIA).

This sequence belongs to the UPF0397 family.

The protein localises to the cell membrane. This chain is UPF0397 protein SGO_0469, found in Streptococcus gordonii (strain Challis / ATCC 35105 / BCRC 15272 / CH1 / DL1 / V288).